The chain runs to 101 residues: MVDISRELQVALNTGKVIIGFEETKKAVLAGTPKLVILAANAPKWARGDIEYYAKLAGVPVFIFPGSSIELGAAAKRPHKIMALAVLDPGQSEILKVVEHV.

The protein belongs to the eukaryotic ribosomal protein eL30 family.

This chain is Large ribosomal subunit protein eL30, found in Pyrobaculum neutrophilum (strain DSM 2338 / JCM 9278 / NBRC 100436 / V24Sta) (Thermoproteus neutrophilus).